The primary structure comprises 467 residues: Asparagine--tRNA ligase (467 aa).

The protein belongs to the class-II aminoacyl-tRNA synthetase family. Homodimer.

Its subcellular location is the cytoplasm. It catalyses the reaction tRNA(Asn) + L-asparagine + ATP = L-asparaginyl-tRNA(Asn) + AMP + diphosphate + H(+). This chain is Asparagine--tRNA ligase, found in Legionella pneumophila (strain Corby).